The chain runs to 314 residues: DNA-directed RNA polymerase subunit alpha (314 aa).

Residues 1-228 form an alpha N-terminal domain (alpha-NTD) region; it reads MIEIEKPKIE…EHLNIFVGLT (228 aa). Positions 245–314 are alpha C-terminal domain (alpha-CTD); that stretch reads KEKVLEMTIE…ELGLSLRKDD (70 aa).

The protein belongs to the RNA polymerase alpha chain family. Homodimer. The RNAP catalytic core consists of 2 alpha, 1 beta, 1 beta' and 1 omega subunit. When a sigma factor is associated with the core the holoenzyme is formed, which can initiate transcription.

The enzyme catalyses RNA(n) + a ribonucleoside 5'-triphosphate = RNA(n+1) + diphosphate. Its function is as follows. DNA-dependent RNA polymerase catalyzes the transcription of DNA into RNA using the four ribonucleoside triphosphates as substrates. This Geobacillus kaustophilus (strain HTA426) protein is DNA-directed RNA polymerase subunit alpha.